Reading from the N-terminus, the 141-residue chain is Nucleoside diphosphate kinase (141 aa).

ATP is bound by residues lysine 11, phenylalanine 59, arginine 87, threonine 93, arginine 104, and asparagine 114. The Pros-phosphohistidine intermediate role is filled by histidine 117.

This sequence belongs to the NDK family. Homotetramer. The cofactor is Mg(2+).

Its subcellular location is the cytoplasm. It carries out the reaction a 2'-deoxyribonucleoside 5'-diphosphate + ATP = a 2'-deoxyribonucleoside 5'-triphosphate + ADP. The catalysed reaction is a ribonucleoside 5'-diphosphate + ATP = a ribonucleoside 5'-triphosphate + ADP. Functionally, major role in the synthesis of nucleoside triphosphates other than ATP. The ATP gamma phosphate is transferred to the NDP beta phosphate via a ping-pong mechanism, using a phosphorylated active-site intermediate. In Paraburkholderia phytofirmans (strain DSM 17436 / LMG 22146 / PsJN) (Burkholderia phytofirmans), this protein is Nucleoside diphosphate kinase.